We begin with the raw amino-acid sequence, 321 residues long: Eukaryotic translation initiation factor 3 subunit I (321 aa).

WD repeat units follow at residues 8 to 47 (GHER…RLGT), 50 to 89 (GHGG…TLSK), 140 to 179 (VDNS…KLIS), 182 to 221 (EHSK…HLKT), and 279 to 318 (GHFG…DDIE).

This sequence belongs to the eIF-3 subunit I family. As to quaternary structure, component of the eukaryotic translation initiation factor 3 (eIF-3) complex.

Its subcellular location is the cytoplasm. Component of the eukaryotic translation initiation factor 3 (eIF-3) complex, which is involved in protein synthesis of a specialized repertoire of mRNAs and, together with other initiation factors, stimulates binding of mRNA and methionyl-tRNAi to the 40S ribosome. The eIF-3 complex specifically targets and initiates translation of a subset of mRNAs involved in cell proliferation. This chain is Eukaryotic translation initiation factor 3 subunit I, found in Nematostella vectensis (Starlet sea anemone).